The primary structure comprises 63 residues: Large ribosomal subunit protein uL29 (63 aa).

The protein belongs to the universal ribosomal protein uL29 family.

The polypeptide is Large ribosomal subunit protein uL29 (Edwardsiella ictaluri (strain 93-146)).